Here is a 505-residue protein sequence, read N- to C-terminus: MDLLLIEKTLVALFAAIIGAILISKLRGKKFKLPPGPIPVPIFGNWLQVGDDLNHRNLTDLAKRFGEILLLRMGQRNLVVVSSPELAKEVLHTQGVEFGSRTRNVVFDIFTGKGQDMVFTVYGEHWRKMRRIMTVPFFTNKVVQQYRYGWEAEAAAVVDDVKKNPAAATEGIVIRRRLQLMMYNNMFRIMFDRRFESEDDPLFLKLKALNGERSRLAQSFEYNYGDFIPILRPFLRNYLKLCKEVKDKRIQLFKDYFVDERKKIGSTKKMDNNQLKCAIDHILEAKEKGEINEDNVLYIVENINVAAIETTLWSIEWGIAELVNHPEIQAKLRHELDTKLGPGVQITEPDVQNLPYLQAVVKETLRLRMAIPLLVPHMNLHDAKLGGFDIPAESKILVNAWWLANNPDQWKKPEEFRPERFLEEEAKVEANGNDFRYLPFGVGRRSCPGIILALPILGITIGRLVQNFELLPPPGQSKIDTDEKGGQFSLHILKHSTIVAKPRSF.

A helical transmembrane segment spans residues 3–23 (LLLIEKTLVALFAAIIGAILI). (E)-cinnamate contacts are provided by residues 213–218 (RSRLAQ) and alanine 306. Residue cysteine 447 coordinates heme.

Belongs to the cytochrome P450 family. The cofactor is heme.

Its subcellular location is the membrane. The enzyme catalyses (E)-cinnamate + reduced [NADPH--hemoprotein reductase] + O2 = (E)-4-coumarate + oxidized [NADPH--hemoprotein reductase] + H2O + H(+). Its pathway is phenylpropanoid metabolism; trans-4-coumarate biosynthesis; trans-4-coumarate from trans-cinnamate: step 1/1. Its activity is regulated as follows. Inactivated by piperonylic acid. In terms of biological role, catalyzes the first oxidative step of the phenylpropanoid pathway in higher plants by transforming trans-cinnamate into p-coumarate. The compounds formed by this pathway are essential components for lignification, pollination, and defense against ultraviolet light, predators and pathogens. Can also use 2-naphthoic acid as substrate. The polypeptide is Trans-cinnamate 4-monooxygenase (Helianthus tuberosus (Jerusalem artichoke)).